Reading from the N-terminus, the 1623-residue chain is RING finger protein 17 (1623 aa).

The tract at residues 1–22 is disordered; the sequence is MAAEASKTGPSRSSYQRMGRKS. An RING-type zinc finger spans residues 32-75; the sequence is CTRCGRRVSRSSGHHCELQCGHAFCELCLLMTEECTTIICPDCE. Lys234 carries the N6-acetyllysine modification. Tudor domains are found at residues 726–784, 962–1021, and 1228–1285; these read CPVQ…FLNA, KWEN…LKTM, and FWKK…PDIP. The tract at residues 1438-1462 is disordered; that stretch reads NQSNQHSDTDDSGVSGESESESLDE. A Tudor 4 domain is found at 1479-1539; the sequence is DFRTEMPCLA…CQIPSHLMRY (61 aa).

Interacts with MXD1, MXD3, MXD4, MXI1 and PIWIL1. Self-associates. In terms of tissue distribution, testis specific.

The protein localises to the cytoplasm. Its subcellular location is the nucleus. Its function is as follows. Seems to be involved in regulation of transcriptional activity of MYC. In vitro, inhibits DNA-binding activity of Mad-MAX heterodimers. Can recruit Mad transcriptional repressors (MXD1, MXD3, MXD4 and MXI1) to the cytoplasm. May be involved in spermiogenesis. The chain is RING finger protein 17 (RNF17) from Homo sapiens (Human).